A 531-amino-acid polypeptide reads, in one-letter code: Probable calcium-binding mitochondrial carrier F17E5.2 (531 aa).

4 consecutive EF-hand domains span residues 70–105, 106–135, 136–171, and 172–207; these read EKEK…QAHI, PASV…NYVI, AHEA…MGVN, and LDDQ…YPST. 5 residues coordinate Ca(2+): Asp83, Asp85, Asp87, Ser89, and Asp94. Residues Asp149, Asn151, Asp153, Glu155, and Glu160 each coordinate Ca(2+). 3 Solcar repeats span residues 242-328, 338-424, and 435-525; these read GVWW…IKRW, LSTI…LKSM, and PGVL…VRKQ. The next 6 helical transmembrane spans lie at 248 to 265, 303 to 322, 348 to 361, 399 to 418, 441 to 458, and 500 to 517; these read LVAG…TAPF, GNGI…FMCY, SSAG…IYPM, GYLP…LTVY, LACG…SYPL, and GITP…ISYV.

It belongs to the mitochondrial carrier (TC 2.A.29) family.

Its subcellular location is the mitochondrion inner membrane. Calcium-dependent mitochondrial solute carrier. The protein is Probable calcium-binding mitochondrial carrier F17E5.2 of Caenorhabditis elegans.